We begin with the raw amino-acid sequence, 377 residues long: Flap endonuclease 1 (377 aa).

The interval 1–105 (MGIKGLNAII…HELSKRTARR (105 aa)) is N-domain. Asp34 is a binding site for Mg(2+). Arg47 and Arg71 together coordinate DNA. Asp87 provides a ligand contact to Mg(2+). The disordered stretch occupies residues 99-119 (SKRTARREETEKKLQEATDQA). The interval 120–251 (EKMKQERRLV…VTALKLIKEY (132 aa)) is I-domain. Residues Glu156, Glu158, Asp177, and Asp179 each coordinate Mg(2+). Residue Glu156 coordinates DNA. DNA is bound by residues Gly229 and Asp231. A Mg(2+)-binding site is contributed by Asp231. An interaction with PCNA region spans residues 338-346 (VQGRLDGFF).

It belongs to the XPG/RAD2 endonuclease family. FEN1 subfamily. In terms of assembly, interacts with PCNA. Three molecules of FEN1 bind to one PCNA trimer with each molecule binding to one PCNA monomer. PCNA stimulates the nuclease activity without altering cleavage specificity. Mg(2+) serves as cofactor. In terms of processing, phosphorylated. Phosphorylation upon DNA damage induces relocalization to the nuclear plasma.

The protein localises to the nucleus. Its subcellular location is the nucleolus. It is found in the nucleoplasm. The protein resides in the mitochondrion. Its function is as follows. Structure-specific nuclease with 5'-flap endonuclease and 5'-3' exonuclease activities involved in DNA replication and repair. During DNA replication, cleaves the 5'-overhanging flap structure that is generated by displacement synthesis when DNA polymerase encounters the 5'-end of a downstream Okazaki fragment. It enters the flap from the 5'-end and then tracks to cleave the flap base, leaving a nick for ligation. Also involved in the long patch base excision repair (LP-BER) pathway, by cleaving within the apurinic/apyrimidinic (AP) site-terminated flap. Acts as a genome stabilization factor that prevents flaps from equilibrating into structures that lead to duplications and deletions. Also possesses 5'-3' exonuclease activity on nicked or gapped double-stranded DNA, and exhibits RNase H activity. Also involved in replication and repair of rDNA and in repairing mitochondrial DNA. In Vanderwaltozyma polyspora (strain ATCC 22028 / DSM 70294 / BCRC 21397 / CBS 2163 / NBRC 10782 / NRRL Y-8283 / UCD 57-17) (Kluyveromyces polysporus), this protein is Flap endonuclease 1.